The sequence spans 359 residues: Alanine racemase, biosynthetic (359 aa).

Lysine 34 serves as the catalytic Proton acceptor; specific for D-alanine. Lysine 34 is subject to N6-(pyridoxal phosphate)lysine. Lysine 122 carries the N6-carboxylysine modification. Arginine 129 provides a ligand contact to substrate. Tyrosine 255 acts as the Proton acceptor; specific for L-alanine in catalysis. Methionine 303 is a substrate binding site.

This sequence belongs to the alanine racemase family. In terms of assembly, homodimer. The cofactor is pyridoxal 5'-phosphate.

It carries out the reaction L-alanine = D-alanine. Its pathway is amino-acid biosynthesis; D-alanine biosynthesis; D-alanine from L-alanine: step 1/1. It functions in the pathway cell wall biogenesis; peptidoglycan biosynthesis. Functionally, catalyzes the interconversion of L-alanine and D-alanine. Provides the D-alanine required for cell wall biosynthesis. The sequence is that of Alanine racemase, biosynthetic from Escherichia coli (strain K12).